The following is a 504-amino-acid chain: Maturase K (504 aa).

This sequence belongs to the intron maturase 2 family. MatK subfamily.

It is found in the plastid. The protein resides in the chloroplast. In terms of biological role, usually encoded in the trnK tRNA gene intron. Probably assists in splicing its own and other chloroplast group II introns. In Ochroma pyramidale (Balsa), this protein is Maturase K.